A 483-amino-acid chain; its full sequence is Regulatory protein ViaA (483 aa).

Belongs to the ViaA family. As to quaternary structure, homodimer. Interacts with RavA.

It is found in the cytoplasm. Functionally, component of the RavA-ViaA chaperone complex, which may act on the membrane to optimize the function of some of the respiratory chains. ViaA stimulates the ATPase activity of RavA. In Escherichia coli O6:K15:H31 (strain 536 / UPEC), this protein is Regulatory protein ViaA.